Reading from the N-terminus, the 33-residue chain is Photosystem II reaction center protein Psb30 (33 aa).

A helical transmembrane segment spans residues Val5 to Leu25.

This sequence belongs to the Psb30/Ycf12 family. PSII is composed of 1 copy each of membrane proteins PsbA, PsbB, PsbC, PsbD, PsbE, PsbF, PsbH, PsbI, PsbJ, PsbK, PsbL, PsbM, PsbT, PsbX, PsbY, PsbZ, Psb30/Ycf12, peripheral proteins of the oxygen-evolving complex and a large number of cofactors. It forms dimeric complexes.

It is found in the plastid. Its subcellular location is the chloroplast thylakoid membrane. In terms of biological role, a core subunit of photosystem II (PSII), probably helps stabilize the reaction center. The sequence is that of Photosystem II reaction center protein Psb30 from Pinus koraiensis (Korean pine).